Here is a 137-residue protein sequence, read N- to C-terminus: MFKTILLAYDGSDHAKRAAAVAKAEAQAHGARLLVVHAYEPVPDYLGEPFFEEALKRRLERAEKVRAEAMALTGVPREDALLLQGRPAEAILQAAIGEKADLIVMGTRGLGAVGSLFLGSQSQKVVAEAPCPVLLVR.

This sequence belongs to the universal stress protein A family.

This Thermus aquaticus protein is Universal stress protein in QAH/OAS sulfhydrylase 3'region.